The chain runs to 252 residues: Imidazole glycerol phosphate synthase subunit HisF (252 aa).

Active-site residues include D11 and D130.

This sequence belongs to the HisA/HisF family. As to quaternary structure, heterodimer of HisH and HisF.

It localises to the cytoplasm. The catalysed reaction is 5-[(5-phospho-1-deoxy-D-ribulos-1-ylimino)methylamino]-1-(5-phospho-beta-D-ribosyl)imidazole-4-carboxamide + L-glutamine = D-erythro-1-(imidazol-4-yl)glycerol 3-phosphate + 5-amino-1-(5-phospho-beta-D-ribosyl)imidazole-4-carboxamide + L-glutamate + H(+). The protein operates within amino-acid biosynthesis; L-histidine biosynthesis; L-histidine from 5-phospho-alpha-D-ribose 1-diphosphate: step 5/9. Functionally, IGPS catalyzes the conversion of PRFAR and glutamine to IGP, AICAR and glutamate. The HisF subunit catalyzes the cyclization activity that produces IGP and AICAR from PRFAR using the ammonia provided by the HisH subunit. The protein is Imidazole glycerol phosphate synthase subunit HisF of Geobacillus kaustophilus (strain HTA426).